Reading from the N-terminus, the 657-residue chain is UvrABC system protein B (657 aa).

The region spanning 23 to 414 (KSIKKGNKYQ…KENIFHQIMR (392 aa)) is the Helicase ATP-binding domain. Residue 36-43 (GVTGSGKT) participates in ATP binding. Residues 89-112 (YYDYYQPEAYIPRTDVFIEKDSST) carry the Beta-hairpin motif. The Helicase C-terminal domain occupies 431–593 (QVEILFDEAK…ITPTSVKRHI (163 aa)). The UVR domain occupies 622-657 (AKLAKELRKQMLEAAKALEFEKAAAIRDEINKLRDL).

It belongs to the UvrB family. As to quaternary structure, forms a heterotetramer with UvrA during the search for lesions. Interacts with UvrC in an incision complex.

It is found in the cytoplasm. Its function is as follows. The UvrABC repair system catalyzes the recognition and processing of DNA lesions. A damage recognition complex composed of 2 UvrA and 2 UvrB subunits scans DNA for abnormalities. Upon binding of the UvrA(2)B(2) complex to a putative damaged site, the DNA wraps around one UvrB monomer. DNA wrap is dependent on ATP binding by UvrB and probably causes local melting of the DNA helix, facilitating insertion of UvrB beta-hairpin between the DNA strands. Then UvrB probes one DNA strand for the presence of a lesion. If a lesion is found the UvrA subunits dissociate and the UvrB-DNA preincision complex is formed. This complex is subsequently bound by UvrC and the second UvrB is released. If no lesion is found, the DNA wraps around the other UvrB subunit that will check the other stand for damage. This is UvrABC system protein B from Campylobacter jejuni (strain RM1221).